The following is a 429-amino-acid chain: Histidine--tRNA ligase (429 aa).

The protein belongs to the class-II aminoacyl-tRNA synthetase family. Homodimer.

It localises to the cytoplasm. The enzyme catalyses tRNA(His) + L-histidine + ATP = L-histidyl-tRNA(His) + AMP + diphosphate + H(+). The sequence is that of Histidine--tRNA ligase from Pseudomonas syringae pv. tomato (strain ATCC BAA-871 / DC3000).